The following is a 253-amino-acid chain: Complement C1q subcomponent subunit B (253 aa).

Positions 1–25 (MKTQWGEVWTHLLLLLLGFLHVSWA) are cleaved as a signal peptide. At Q26 the chain carries Pyrrolidone carboxylic acid. The region spanning 29–112 (CTGPPGIPGI…GPRGPKGDSG (84 aa)) is the Collagen-like domain. 4-hydroxyproline is present on residues P33, P36, P39, P51, and P54. The segment at 35 to 115 (IPGIPGVPGV…GPKGDSGDYG (81 aa)) is disordered. 5-hydroxylysine occurs at positions 57 and 60. P63 is subject to 4-hydroxyproline. The residue at position 75 (K75) is a 5-hydroxylysine. Residues 78 to 96 (PGIPGTPGKVGPKGPVGPK) show a composition bias toward low complexity. 2 positions are modified to 4-hydroxyproline: P81 and P84. 5-hydroxylysine occurs at positions 90 and 96. 4-hydroxyproline is present on P99. K108 bears the 5-hydroxylysine mark. The region spanning 115–253 (GATQKVAFSA…GFLLFPDMDA (139 aa)) is the C1q domain. C179 and C198 are disulfide-bonded. Residues D199, Y200, and Q206 each coordinate Ca(2+).

Core component of the complement C1 complex, a calcium-dependent complex composed of 1 molecule of the C1Q subcomplex, 2 molecules of C1R and 2 molecules of C1S. The C1Q subcomplex is composed 18 subunits: 3 chains of C1QA, C1QB, and C1QC trimerize to form 6 collagen-like triple helices connected to six globular ligand-recognition modules (C1q domain). Hydroxylated on lysine and proline residues. Hydroxylated lysine residues can be glycosylated. Mouse C1Q contains up to 64.0 hydroxylysine-galactosylglucose residues. Total percentage hydroxylysine residues glycosylated is 95.1%. Contains no hydroxylysine-monosaccharides. In terms of tissue distribution, highest expression in thioglycolate-activated peritoneal macrophages. Also found in spleen, thymus and heart. Very weak expression liver, kidney, lung and intestine.

Its subcellular location is the secreted. The protein resides in the cell surface. With respect to regulation, the C1Q subcomplex is inhibited by sulfated molecules, such as triterpenoid sulfates, heparan sulfate, or chondroitin sulfates. Functionally, core component of the complement C1 complex, a multiprotein complex that initiates the classical pathway of the complement system, a cascade of proteins that leads to phagocytosis and breakdown of pathogens and signaling that strengthens the adaptive immune system. The classical complement pathway is initiated by the C1Q subcomplex of the C1 complex, which specifically binds IgG or IgM immunoglobulins complexed with antigens, forming antigen-antibody complexes on the surface of pathogens: C1QA, together with C1QB and C1QC, specifically recognizes and binds the Fc regions of IgG or IgM via its C1q domain. Immunoglobulin-binding activates the proenzyme C1R, which cleaves C1S, initiating the proteolytic cascade of the complement system. The C1Q subcomplex is activated by a hexamer of IgG complexed with antigens, while it is activated by a pentameric IgM. The C1Q subcomplex also recognizes and binds phosphatidylserine exposed on the surface of cells undergoing programmed cell death, possibly promoting activation of the complement system. The sequence is that of Complement C1q subcomponent subunit B from Mus musculus (Mouse).